We begin with the raw amino-acid sequence, 429 residues long: Histidine--tRNA ligase (429 aa).

Belongs to the class-II aminoacyl-tRNA synthetase family. Homodimer.

It is found in the cytoplasm. It catalyses the reaction tRNA(His) + L-histidine + ATP = L-histidyl-tRNA(His) + AMP + diphosphate + H(+). The protein is Histidine--tRNA ligase of Streptococcus pneumoniae (strain 70585).